Consider the following 533-residue polypeptide: MDLSGNEKSRPWKKANVSSSTISDIQMTNGENLESGSPTRTEVLSPRLDDGSVDSSSSLYSGSEHGNQAEIQKELSALFSNMSLPGNDRRPDEYILVRQTGQDAFTGIAKGNLDHMPTKAEFNACCRLYRDGAGNYYPPPLAFDKISVPAQLEETWGMMEAKERNKLRFQYKLDVWNHAHADMGITGTEIFYQTDKNIKLDRNYKLRPEDRYVQTERYGRREIQKRYQHELQAGSLLPDIMIKTPKNDIHFVYRFAGDNYANKQFSEFEHTVKRRYGGETEIKLKSKSGIMHDSKYLESWERGSADIRFAEFVGENRAHNRQFPTATVNMGQQPDGQGGLTRDRHVSVEFLMQSAPNSPWAQALKKGELWDRVQLLARDGNRYLSPHRLEYSDPEHFTELMNRVGLPASMGRQSHAASIKFEKFDAQAAVIVINGPELRDIHDLSPENLQNVSTKDVIVADRNENGQRTGTYTSVAEYERLQLRLPADAAGVLGEAADKYSRDFVRPEPASRPISDSRRIYESRPRSQSVNSF.

Over residues 1-10 the composition is skewed to basic and acidic residues; it reads MDLSGNEKSR. Disordered stretches follow at residues 1-67 and 504-533; these read MDLS…EHGN and FVRP…VNSF. The span at 16-42 shows a compositional bias: polar residues; it reads NVSSSTISDIQMTNGENLESGSPTRTE. The segment covering 53-63 has biased composition (low complexity); the sequence is VDSSSSLYSGS. Over residues 515–525 the composition is skewed to basic and acidic residues; it reads SDSRRIYESRP.

In terms of assembly, forms heterodimers with the chaperone protein virE1 that prevent virE2 anarchic homopolymerization. Interacts with host VIP1 that mediates its translocation to the host nucleus and host VIP2 that promotes T-DNA integration into the host genome. Forms a complex made of VirE2, host VIP1 and VIP2 and single-stranded DNA (ssDNA). Forms a complex made of virE2 and host proteins VIP1 and VBF.

The protein localises to the secreted. It localises to the host nucleus. Its function is as follows. Involved in DNA transformation; mediates the nuclear uptake of single-stranded DNA copies of the transferred DNA (T-DNA) element. Binds single-stranded but not double-stranded DNA regardless of nucleotide sequence composition. This is Single-strand DNA-binding protein (virE2) from Agrobacterium tumefaciens (strain 15955).